A 197-amino-acid polypeptide reads, in one-letter code: Ubiquitin-conjugating enzyme E2 T (197 aa).

In terms of domain architecture, UBC core spans 2–152 (QRASRLKREL…ARQWTEKHAR (151 aa)). Cys86 (glycyl thioester intermediate) is an active-site residue. Glycyl lysine isopeptide (Lys-Gly) (interchain with G-Cter in ubiquitin) cross-links involve residues Lys91 and Lys182. The disordered stretch occupies residues 149 to 197 (KHARQKQKADEEEMLDNLPEAGDSRVHNSTQKRKASQLVGIEKKFHPDV). Residue Ser184 is modified to Phosphoserine. Residues Lys191 and Lys192 each participate in a glycyl lysine isopeptide (Lys-Gly) (interchain with G-Cter in SUMO2) cross-link.

The protein belongs to the ubiquitin-conjugating enzyme family. As to quaternary structure, directly interacts with FANCL. Interacts with BRCA1. Post-translationally, auto-ubiquitinated. Effects of auto-monoubiquitination at Lys-91 and Lys-182 are unclear: according to a report, monoubiquitination inactivates E2 enzyme activity. In contrast, according to another report, autoubiquitination does not affect E2 enzyme activity.

It localises to the nucleus. It carries out the reaction S-ubiquitinyl-[E1 ubiquitin-activating enzyme]-L-cysteine + [E2 ubiquitin-conjugating enzyme]-L-cysteine = [E1 ubiquitin-activating enzyme]-L-cysteine + S-ubiquitinyl-[E2 ubiquitin-conjugating enzyme]-L-cysteine.. It participates in protein modification; protein ubiquitination. Accepts ubiquitin from the E1 complex and catalyzes its covalent attachment to other proteins. Catalyzes monoubiquitination. Involved in mitomycin-C (MMC)-induced DNA repair. Acts as a specific E2 ubiquitin-conjugating enzyme for the Fanconi anemia complex by associating with E3 ubiquitin-protein ligase FANCL and catalyzing monoubiquitination of FANCD2, a key step in the DNA damage pathway. Also mediates monoubiquitination of FANCL and FANCI. May contribute to ubiquitination and degradation of BRCA1. In vitro able to promote polyubiquitination using all 7 ubiquitin Lys residues, but may prefer 'Lys-11'-, 'Lys-27'-, 'Lys-48'- and 'Lys-63'-linked polyubiquitination. This chain is Ubiquitin-conjugating enzyme E2 T (UBE2T), found in Homo sapiens (Human).